The primary structure comprises 484 residues: MEWRGILCSLLFIVSVGESSSRFGIMWHPNLGVDSGQYLTWPILSASVFVVIAILLPMYLIFEHLASYNQPEEQKFLIGLILMVPVYAVESFLSLVNSEAAFNCEVIRDCYEAFALYCFERYLIACLDGEERTIEFMEQQTVITQSTPLLEGTCSYGVVEHPFPMNCFVKDWSLGPQFYHAVKIGIVQYMILKMICALLAMILEAFGVYGEGKFAWNYGYPYLAVVLNFSQTWALYCLVQFYNVIKDKLAPIKPLAKFLTFKSIVFLTWWQGIIVAFLFSMGLVKGSLAKELKTRIQDYIICIEMGIAAVVHLYVFPAAPYKRGERCVRNVAVMSDYASIDVPPDPEEVKDSERTTRTRYGRHDDREKRLNFPQSVRDVVLGSGEIIVDDMRFTVSHVVEPVERGIAKINRTFHQISENVKRFEQQKKTTKDDSYVIPLNQWAKEFSDVHENLYDGGSVSDSGLGSTNRHHQSRVSGLWTRMRR.

The signal sequence occupies residues 1–19 (MEWRGILCSLLFIVSVGES). 6 helical membrane-spanning segments follow: residues 42 to 62 (PILSASVFVVIAILLPMYLIF), 76 to 96 (FLIGLILMVPVYAVESFLSLV), 190 to 210 (MILKMICALLAMILEAFGVYG), 219 to 239 (GYPYLAVVLNFSQTWALYCLV), 264 to 284 (IVFLTWWQGIIVAFLFSMGLV), and 299 to 319 (YIICIEMGIAAVVHLYVFPAA). The interval 344 to 364 (PDPEEVKDSERTTRTRYGRHD) is disordered. Residues 347 to 364 (EEVKDSERTTRTRYGRHD) show a composition bias toward basic and acidic residues. Residues 406-428 (IAKINRTFHQISENVKRFEQQKK) are a coiled coil. The interval 459–484 (VSDSGLGSTNRHHQSRVSGLWTRMRR) is disordered.

It belongs to the TMEM184 family.

It localises to the membrane. This Arabidopsis thaliana (Mouse-ear cress) protein is Protein LAZ1 homolog 1.